A 356-amino-acid polypeptide reads, in one-letter code: 4-hydroxy-3-methylbut-2-en-1-yl diphosphate synthase (flavodoxin) (356 aa).

Positions 264, 267, 299, and 306 each coordinate [4Fe-4S] cluster.

This sequence belongs to the IspG family. Requires [4Fe-4S] cluster as cofactor.

The catalysed reaction is (2E)-4-hydroxy-3-methylbut-2-enyl diphosphate + oxidized [flavodoxin] + H2O + 2 H(+) = 2-C-methyl-D-erythritol 2,4-cyclic diphosphate + reduced [flavodoxin]. It functions in the pathway isoprenoid biosynthesis; isopentenyl diphosphate biosynthesis via DXP pathway; isopentenyl diphosphate from 1-deoxy-D-xylulose 5-phosphate: step 5/6. Functionally, converts 2C-methyl-D-erythritol 2,4-cyclodiphosphate (ME-2,4cPP) into 1-hydroxy-2-methyl-2-(E)-butenyl 4-diphosphate. This chain is 4-hydroxy-3-methylbut-2-en-1-yl diphosphate synthase (flavodoxin), found in Campylobacter lari (strain RM2100 / D67 / ATCC BAA-1060).